The primary structure comprises 254 residues: Indole-3-glycerol phosphate synthase (254 aa).

It belongs to the TrpC family.

The catalysed reaction is 1-(2-carboxyphenylamino)-1-deoxy-D-ribulose 5-phosphate + H(+) = (1S,2R)-1-C-(indol-3-yl)glycerol 3-phosphate + CO2 + H2O. The protein operates within amino-acid biosynthesis; L-tryptophan biosynthesis; L-tryptophan from chorismate: step 4/5. The polypeptide is Indole-3-glycerol phosphate synthase (Methanopyrus kandleri (strain AV19 / DSM 6324 / JCM 9639 / NBRC 100938)).